The chain runs to 438 residues: Mannan endo-1,4-beta-mannosidase F (438 aa).

The N-terminal stretch at 1 to 17 is a signal peptide; it reads MHPLPSVALLSAIGAVA. The 36-residue stretch at 19–54 folds into the CBM1 domain; sequence QVGPWGQCGGRSYTGETSCVSGWSCVLFNEWYSQCQ. Residues 60–96 are ser-rich linker; the sequence is STSSVSATAAPSSTSSSKESVPSATTSKKPVPTGSSS. Over residues 61-86 the composition is skewed to low complexity; the sequence is TSSVSATAAPSSTSSSKESVPSATTS. A disordered region spans residues 61-92; that stretch reads TSSVSATAAPSSTSSSKESVPSATTSKKPVPT. The segment at 97 to 438 is catalytic; it reads FVKADGLKFN…CGVADHLSTL (342 aa). Trp-149 and Asn-263 together coordinate substrate. Glu-264 serves as the catalytic Proton donor. N-linked (GlcNAc...) asparagine glycosylation is present at Asn-277. Residue Tyr-339 participates in substrate binding. Glu-373 (nucleophile) is an active-site residue. Trp-402 is a substrate binding site.

The protein belongs to the glycosyl hydrolase 5 (cellulase A) family.

The protein resides in the secreted. It carries out the reaction Random hydrolysis of (1-&gt;4)-beta-D-mannosidic linkages in mannans, galactomannans and glucomannans.. Endo-1,4-mannanase, a crucial enzyme for depolymerization of seed galactomannans and wood galactoglucomannans. The chain is Mannan endo-1,4-beta-mannosidase F (manF) from Aspergillus fumigatus (strain ATCC MYA-4609 / CBS 101355 / FGSC A1100 / Af293) (Neosartorya fumigata).